Reading from the N-terminus, the 334-residue chain is Holliday junction branch migration complex subunit RuvB (334 aa).

Residues 4–184 (ADRLISAAVI…FGIVQRLEFY (181 aa)) form a large ATPase domain (RuvB-L) region. ATP contacts are provided by residues Ile23, Arg24, Gly65, Lys68, Thr69, Thr70, 131 to 133 (EDY), Arg174, Tyr184, and Arg221. Thr69 serves as a coordination point for Mg(2+). Residues 185–255 (PVADLEHIVS…VAMKALDMLN (71 aa)) form a small ATPAse domain (RuvB-S) region. The interval 258 to 334 (AEGFDFMDRK…YKHFGITREE (77 aa)) is head domain (RuvB-H). DNA is bound by residues Arg294, Arg313, and Arg318.

The protein belongs to the RuvB family. In terms of assembly, homohexamer. Forms an RuvA(8)-RuvB(12)-Holliday junction (HJ) complex. HJ DNA is sandwiched between 2 RuvA tetramers; dsDNA enters through RuvA and exits via RuvB. An RuvB hexamer assembles on each DNA strand where it exits the tetramer. Each RuvB hexamer is contacted by two RuvA subunits (via domain III) on 2 adjacent RuvB subunits; this complex drives branch migration. In the full resolvosome a probable DNA-RuvA(4)-RuvB(12)-RuvC(2) complex forms which resolves the HJ.

The protein localises to the cytoplasm. It carries out the reaction ATP + H2O = ADP + phosphate + H(+). The RuvA-RuvB-RuvC complex processes Holliday junction (HJ) DNA during genetic recombination and DNA repair, while the RuvA-RuvB complex plays an important role in the rescue of blocked DNA replication forks via replication fork reversal (RFR). RuvA specifically binds to HJ cruciform DNA, conferring on it an open structure. The RuvB hexamer acts as an ATP-dependent pump, pulling dsDNA into and through the RuvAB complex. RuvB forms 2 homohexamers on either side of HJ DNA bound by 1 or 2 RuvA tetramers; 4 subunits per hexamer contact DNA at a time. Coordinated motions by a converter formed by DNA-disengaged RuvB subunits stimulates ATP hydrolysis and nucleotide exchange. Immobilization of the converter enables RuvB to convert the ATP-contained energy into a lever motion, pulling 2 nucleotides of DNA out of the RuvA tetramer per ATP hydrolyzed, thus driving DNA branch migration. The RuvB motors rotate together with the DNA substrate, which together with the progressing nucleotide cycle form the mechanistic basis for DNA recombination by continuous HJ branch migration. Branch migration allows RuvC to scan DNA until it finds its consensus sequence, where it cleaves and resolves cruciform DNA. This is Holliday junction branch migration complex subunit RuvB from Yersinia pestis bv. Antiqua (strain Angola).